The chain runs to 72 residues: Large ribosomal subunit protein bL28 (72 aa).

It belongs to the bacterial ribosomal protein bL28 family.

In Chlorobium chlorochromatii (strain CaD3), this protein is Large ribosomal subunit protein bL28.